A 291-amino-acid polypeptide reads, in one-letter code: 4-hydroxy-tetrahydrodipicolinate synthase (291 aa).

A pyruvate-binding site is contributed by Thr44. Tyr132 functions as the Proton donor/acceptor in the catalytic mechanism. The active-site Schiff-base intermediate with substrate is Lys161. Residue Ile202 participates in pyruvate binding.

The protein belongs to the DapA family. In terms of assembly, homotetramer; dimer of dimers.

The protein resides in the cytoplasm. The enzyme catalyses L-aspartate 4-semialdehyde + pyruvate = (2S,4S)-4-hydroxy-2,3,4,5-tetrahydrodipicolinate + H2O + H(+). It participates in amino-acid biosynthesis; L-lysine biosynthesis via DAP pathway; (S)-tetrahydrodipicolinate from L-aspartate: step 3/4. Its function is as follows. Catalyzes the condensation of (S)-aspartate-beta-semialdehyde [(S)-ASA] and pyruvate to 4-hydroxy-tetrahydrodipicolinate (HTPA). The sequence is that of 4-hydroxy-tetrahydrodipicolinate synthase from Endomicrobium trichonymphae.